Here is a 1125-residue protein sequence, read N- to C-terminus: Telomerase reverse transcriptase (1125 aa).

An RNA-interacting domain 1 region spans residues 1 to 239; the sequence is MPRAPRCPAV…TKRLLSLTST (239 aa). Positions 58–205 are GQ motif; that stretch reads VPWGSQPPPA…RPVGGNFTNL (148 aa). The segment at 137–141 is required for regulating specificity for telomeric DNA and for processivity for primer elongation; the sequence is WMLLL. Residues 206 to 216 show a composition bias toward polar residues; the sequence is GSAHQIKNSGH. Residues 206–304 form a disordered region; sequence GSAHQIKNSG…ASDPSLSGSV (99 aa). Positions 240–328 are linker; the sequence is NVPSAKKARF…PPQDAEKLRP (89 aa). Residues 247 to 259 are compositionally biased toward basic and acidic residues; it reads ARFEPALRVDKGP. Positions 273–287 are enriched in low complexity; it reads APSPAASPKVPPAAK. A required for oligomerization region spans residues 306–528; sequence CKHKPSSSSL…VPAAEHRLRE (223 aa). The segment at 329–540 is RNA-interacting domain 2; that stretch reads FTETRHFLYS…LAMFLFWLMD (212 aa). The short motif at 332–337 is the TFLY; involved in RNA binding element; that stretch reads TRHFLY. Residues 381-511 form a QFP motif region; that stretch reads FCRTRRLPRR…VKVEDCHWLR (131 aa). The tract at residues 402–422 is CP motif; sequence LMNHAKCQYVRFLRSHCRFRT. Residue S447 is modified to Phosphoserine; by DYRK2. The 334-residue stretch at 595–928 folds into the Reverse transcriptase domain; sequence EVKHHQDTWL…CLFPWCGLLL (334 aa). Y697 carries the phosphotyrosine; by SRC-type Tyr-kinases modification. Positions 702, 861, and 862 each coordinate Mg(2+). Residues 907–921 are required for oligomerization; the sequence is LGGAAPHQLPAHCLF. The interval 923–927 is primer grip sequence; it reads WCGLL. Positions 929 to 1125 are CTE; it reads DTRTLEVFCD…LSTDFQTILD (197 aa).

It belongs to the reverse transcriptase family. Telomerase subfamily. Catalytic component of the telomerase holoenzyme complex composed of one molecule of TERT, one molecule of WRAP53/TCAB1, two molecules of H/ACA ribonucleoprotein complex subunits DKC1, NOP10, NHP2 and GAR1, and a telomerase RNA template component (TERC). The telomerase holoenzyme complex is associated with TEP1, SMG6/EST1A and POT1. The molecular chaperone HSP90/P23 complex is required for correct assembly and stabilization of the active telomerase. Interacts directly with HSP90A and PTGES3. Interacts with HSPA1A; the interaction occurs in the absence of TERC and dissociates once the complex has formed. Interacts with RAN; the interaction promotes nuclear export of TERT. Interacts with XPO1. Interacts with PTPN11; the interaction retains TERT in the nucleus. Interacts with NCL (via RRM1 and C-terminal RRM4/Arg/Gly-rich domains); the interaction is important for nucleolar localization of TERT. Interacts with SMARCA4 (via the bromodomain); the interaction regulates Wnt-mediated signaling. Interacts with MCRS1 (isoform MCRS2); the interaction inhibits in vitro telomerase activity. Interacts with PIF1; the interaction has no effect on the elongation activity of TERT. Interacts with PML; the interaction recruits TERT to PML bodies and inhibits telomerase activity. Interacts with GNL3L. Interacts with isoform 1 and isoform 2 of NVL. Interacts with DHX36. Interacts with ATF7. Phosphorylation at Tyr-697 under oxidative stress leads to translocation of TERT to the cytoplasm and reduces its antiapoptotic activity. Dephosphorylated by SHP2/PTPN11 leading to nuclear retention. Phosphorylation at the G2/M phase at Ser-447 by DYRK2 promotes ubiquitination by the EDVP complex and degradation. Post-translationally, ubiquitinated by the EDVP complex, a E3 ligase complex following phosphorylation at Ser-447 by DYRK2. Ubiquitinated leads to proteasomal degradation. In terms of tissue distribution, isoform 1 and isoform 2 expressed in thymus, liver, spleen, lung, kidney and testis. High level of inactive isoform 3 in adult hippocampus, low level in heart, cortex and cerebellum.

It is found in the nucleus. Its subcellular location is the nucleolus. The protein localises to the nucleoplasm. The protein resides in the chromosome. It localises to the telomere. It is found in the cytoplasm. Its subcellular location is the PML body. It catalyses the reaction DNA(n) + a 2'-deoxyribonucleoside 5'-triphosphate = DNA(n+1) + diphosphate. Its function is as follows. Telomerase is a ribonucleoprotein enzyme essential for the replication of chromosome termini in most eukaryotes. Active in progenitor and cancer cells. Inactive, or very low activity, in normal somatic cells. Catalytic component of the teleromerase holoenzyme complex whose main activity is the elongation of telomeres by acting as a reverse transcriptase that adds simple sequence repeats to chromosome ends by copying a template sequence within the RNA component of the enzyme. Catalyzes the RNA-dependent extension of 3'-chromosomal termini with the 6-nucleotide telomeric repeat unit, 5'-TTAGGG-3'. The catalytic cycle involves primer binding, primer extension and release of product once the template boundary has been reached or nascent product translocation followed by further extension. More active on substrates containing 2 or 3 telomeric repeats. Telomerase activity is regulated by a number of factors including telomerase complex-associated proteins, chaperones and polypeptide modifiers. Modulates Wnt signaling. Plays important roles in aging and antiapoptosis. This chain is Telomerase reverse transcriptase, found in Rattus norvegicus (Rat).